The chain runs to 312 residues: Acetyl-coenzyme A carboxylase carboxyl transferase subunit alpha (312 aa).

Residues Arg-36–Thr-286 enclose the CoA carboxyltransferase C-terminal domain.

Belongs to the AccA family. As to quaternary structure, acetyl-CoA carboxylase is a heterohexamer composed of biotin carboxyl carrier protein (AccB), biotin carboxylase (AccC) and two subunits each of ACCase subunit alpha (AccA) and ACCase subunit beta (AccD).

Its subcellular location is the cytoplasm. It catalyses the reaction N(6)-carboxybiotinyl-L-lysyl-[protein] + acetyl-CoA = N(6)-biotinyl-L-lysyl-[protein] + malonyl-CoA. It functions in the pathway lipid metabolism; malonyl-CoA biosynthesis; malonyl-CoA from acetyl-CoA: step 1/1. In terms of biological role, component of the acetyl coenzyme A carboxylase (ACC) complex. First, biotin carboxylase catalyzes the carboxylation of biotin on its carrier protein (BCCP) and then the CO(2) group is transferred by the carboxyltransferase to acetyl-CoA to form malonyl-CoA. This is Acetyl-coenzyme A carboxylase carboxyl transferase subunit alpha from Helicobacter pylori (strain Shi470).